The following is an 864-amino-acid chain: Protein translocase subunit SecA (864 aa).

ATP is bound by residues Gln-87, Gly-105 to Thr-109, and Asp-512.

It belongs to the SecA family. Monomer and homodimer. Part of the essential Sec protein translocation apparatus which comprises SecA, SecYEG and auxiliary proteins SecDF-YajC and YidC.

The protein localises to the cell inner membrane. The protein resides in the cytoplasm. The enzyme catalyses ATP + H2O + cellular proteinSide 1 = ADP + phosphate + cellular proteinSide 2.. Its function is as follows. Part of the Sec protein translocase complex. Interacts with the SecYEG preprotein conducting channel. Has a central role in coupling the hydrolysis of ATP to the transfer of proteins into and across the cell membrane, serving as an ATP-driven molecular motor driving the stepwise translocation of polypeptide chains across the membrane. The polypeptide is Protein translocase subunit SecA (Buchnera aphidicola subsp. Cinara cedri (strain Cc)).